Consider the following 529-residue polypeptide: Type I restriction enzyme EcoKI methylase subunit (529 aa).

S-adenosyl-L-methionine is bound by residues 148–153 (QYFTPR), 178–180 (TAG), and glutamate 216.

It belongs to the N(4)/N(6)-methyltransferase family. As to quaternary structure, the type I restriction/modification system is composed of three polypeptides R, M and S. The restriction enzyme has stoichiometry R(2)M(2)S(1). The methyltransferase is composed of M(2)S(1). In terms of assembly, (Microbial infection) Interacts with Escherichia phage T7 protein Ocr; this interaction leads to the inhibition of the methyltransferase restriction enzyme M.EcoKI composed of M(2)S(1).

It catalyses the reaction a 2'-deoxyadenosine in DNA + S-adenosyl-L-methionine = an N(6)-methyl-2'-deoxyadenosine in DNA + S-adenosyl-L-homocysteine + H(+). The subtype gamma methyltransferase (M) subunit of a type I restriction enzyme. The M and S subunits together form a methyltransferase (MTase) that methylates A-2 on the top and A-3 on the bottom strand of the sequence 5'-AACN(6)GTGC-3'. In the presence of the R subunit the complex can also act as an endonuclease, binding to the same target sequence but cutting the DNA some distance from this site. Whether the DNA is cut or modified depends on the methylation state of the target sequence. When the target site is unmodified, the DNA is cut. When the target site is hemimethylated, the complex acts as a maintenance MTase modifying the DNA so that both strands become methylated. After locating a non-methylated recognition site, the enzyme complex serves as a molecular motor that translocates DNA in an ATP-dependent manner until a collision occurs that triggers cleavage. The protein is Type I restriction enzyme EcoKI methylase subunit of Escherichia coli (strain K12).